The chain runs to 447 residues: MNAWEVNFDGLVGLTHHYAGLSFGNEASTSHRFQVSNPRLAAKQGLLKMKALADLGFPQAVIPPHERPFIPVLRQLGFSGSDEQVLEKVARQAPHWLSSVSSASPMWVANAATVAPSADTLDGKVHLTVANLNNKFHRSLEAPVTESLLKAIFNEEKKFAIHSALPQVALLGDEGAANHNRLGGHYGEPGIQLFVYGREEGNVSRPSRYPARQTREASEAVARLNQVNPQQVIFAQQNPDVIDQGVFHNDVIAVSNRQVLFCHQQAFARQAQLLANLRSRVNGFMAIEVPATQVSVSDAVSTYLFNSQLLSRDDGSMMLVLPQECREHAGVWGYLNELLAADNPIRELKVFDLRESMANGGGPACLRLRVVLTEEERRAVNPAVMMNDTLFNALNDWVERYYRDRLTAADLADPLLLREGREALDVLSQLLNLGSVYPFQREGGGNG.

Substrate-binding positions include 19–28 (AGLSFGNEAS), N110, and 137–138 (HR). E174 is an active-site residue. A substrate-binding site is contributed by R212. H248 is an active-site residue. Substrate is bound by residues D250 and N359. Catalysis depends on C365, which acts as the Nucleophile.

Belongs to the succinylarginine dihydrolase family. As to quaternary structure, homodimer.

The enzyme catalyses N(2)-succinyl-L-arginine + 2 H2O + 2 H(+) = N(2)-succinyl-L-ornithine + 2 NH4(+) + CO2. It functions in the pathway amino-acid degradation; L-arginine degradation via AST pathway; L-glutamate and succinate from L-arginine: step 2/5. Catalyzes the hydrolysis of N(2)-succinylarginine into N(2)-succinylornithine, ammonia and CO(2). The protein is N-succinylarginine dihydrolase of Escherichia fergusonii (strain ATCC 35469 / DSM 13698 / CCUG 18766 / IAM 14443 / JCM 21226 / LMG 7866 / NBRC 102419 / NCTC 12128 / CDC 0568-73).